The following is a 340-amino-acid chain: Nitrilase (340 aa).

The region spanning 7 to 273 (IRAAAVQIAP…EGMVVADLDM (267 aa)) is the CN hydrolase domain. The active-site Proton acceptor is Glu-47. The active site involves Lys-129. The Nucleophile role is filled by Cys-163.

This sequence belongs to the carbon-nitrogen hydrolase superfamily. Nitrilase family. In terms of assembly, forms oligomers.

It carries out the reaction a nitrile + 2 H2O = a carboxylate + NH4(+). It catalyses the reaction phenylpropanonitrile + 2 H2O = 3-phenylpropanoate + NH4(+). The catalysed reaction is an aliphatic nitrile + 2 H2O = a carboxylate + NH4(+). Highly resistant to various miscible cosolvents and tolerates high substrate concentrations. Its function is as follows. Catalyzes the hydrolysis of a broad range of nitriles to yield their corresponding carboxylic acid and ammonia. In vitro, shows high activity toward benzylic/unsaturated nitriles. The preferred substrate is trans-cinnamonitrile, followed by mono/di-cyanopyridines and aromatic substituted nitriles, with a moderate activity toward 3-phenylpropionitrile. Shows weaker activity toward the common dinitrile fumaronitrile. Also shows weak activity toward some aliphatic nitriles, including adiponitrile and glutaronitrile, and the arylacetonitrile 2-thiopheneacetonitrile. In Paraburkholderia phymatum (strain DSM 17167 / CIP 108236 / LMG 21445 / STM815) (Burkholderia phymatum), this protein is Nitrilase.